A 587-amino-acid chain; its full sequence is Beta-(1--&gt;2)glucan export ATP-binding/permease protein NdvA (587 aa).

The ABC transmembrane type-1 domain maps to Val21–Glu301. The next 6 membrane-spanning stretches (helical) occupy residues Leu23–Gly43, Pro57–Ala77, Gly128–Ile148, Leu158–Ser178, Met248–Gly268, and Val272–Met292. An ABC transporter domain is found at Ile335–Ala569. Gly368–Thr375 is an ATP binding site.

The protein belongs to the ABC transporter superfamily. Beta-(1--&gt;2)glucan exporter (TC 3.A.1.108.1) family. As to quaternary structure, homodimer.

It is found in the cell inner membrane. It catalyses the reaction [(1-&gt;2)-beta-D-glucosyl](n)(in) + ATP + H2O = [(1-&gt;2)-beta-D-glucosyl](n)(out) + ADP + phosphate + H(+). Functionally, involved in beta-(1--&gt;2)glucan export. Transmembrane domains (TMD) form a pore in the inner membrane and the ATP-binding domain (NBD) is responsible for energy generation. This Rhizobium johnstonii (strain DSM 114642 / LMG 32736 / 3841) (Rhizobium leguminosarum bv. viciae) protein is Beta-(1--&gt;2)glucan export ATP-binding/permease protein NdvA.